A 189-amino-acid polypeptide reads, in one-letter code: Elongation factor P (189 aa).

Lys-34 is modified (N6-(3,6-diaminohexanoyl)-5-hydroxylysine).

The protein belongs to the elongation factor P family. In terms of processing, may be beta-lysylated on the epsilon-amino group of Lys-34 by the combined action of EpmA and EpmB, and then hydroxylated on the C5 position of the same residue by EpmC (if this protein is present). Lysylation is critical for the stimulatory effect of EF-P on peptide-bond formation. The lysylation moiety may extend toward the peptidyltransferase center and stabilize the terminal 3-CCA end of the tRNA. Hydroxylation of the C5 position on Lys-34 may allow additional potential stabilizing hydrogen-bond interactions with the P-tRNA.

The protein localises to the cytoplasm. It functions in the pathway protein biosynthesis; polypeptide chain elongation. Functionally, involved in peptide bond synthesis. Alleviates ribosome stalling that occurs when 3 or more consecutive Pro residues or the sequence PPG is present in a protein, possibly by augmenting the peptidyl transferase activity of the ribosome. Modification of Lys-34 is required for alleviation. This Francisella tularensis subsp. tularensis (strain FSC 198) protein is Elongation factor P.